A 504-amino-acid chain; its full sequence is uncharacterized protein (504 aa).

Residues 36–60 (TAFRMEKEQRLPSQNKPPRGRRRPD) form a disordered region. The Integrase catalytic domain maps to 125–309 (QTHEPGRLGL…RPHLQVLPER (185 aa)).

This is an uncharacterized protein from Sinorhizobium fredii (strain NBRC 101917 / NGR234).